The sequence spans 266 residues: 3-methyl-2-oxobutanoate hydroxymethyltransferase (266 aa).

The Mg(2+) site is built by Asp43 and Asp82. 3-methyl-2-oxobutanoate is bound by residues Asp43–Ser44, Asp82, and Lys110. Residue Glu112 participates in Mg(2+) binding. Glu179 serves as the catalytic Proton acceptor.

Belongs to the PanB family. In terms of assembly, homodecamer; pentamer of dimers. Requires Mg(2+) as cofactor.

It localises to the cytoplasm. It catalyses the reaction 3-methyl-2-oxobutanoate + (6R)-5,10-methylene-5,6,7,8-tetrahydrofolate + H2O = 2-dehydropantoate + (6S)-5,6,7,8-tetrahydrofolate. The protein operates within cofactor biosynthesis; (R)-pantothenate biosynthesis; (R)-pantoate from 3-methyl-2-oxobutanoate: step 1/2. Catalyzes the reversible reaction in which hydroxymethyl group from 5,10-methylenetetrahydrofolate is transferred onto alpha-ketoisovalerate to form ketopantoate. The protein is 3-methyl-2-oxobutanoate hydroxymethyltransferase of Psychrobacter arcticus (strain DSM 17307 / VKM B-2377 / 273-4).